The chain runs to 149 residues: UPF0178 protein CPF_2548 (149 aa).

This sequence belongs to the UPF0178 family.

This chain is UPF0178 protein CPF_2548, found in Clostridium perfringens (strain ATCC 13124 / DSM 756 / JCM 1290 / NCIMB 6125 / NCTC 8237 / Type A).